The chain runs to 231 residues: Lipoprotein-releasing system ATP-binding protein LolD (231 aa).

In terms of domain architecture, ABC transporter spans 6–230; the sequence is LSCKNVSKKY…DGELELVINS (225 aa). Residue 42–49 coordinates ATP; it reads GLSGSGKT.

The protein belongs to the ABC transporter superfamily. Lipoprotein translocase (TC 3.A.1.125) family. In terms of assembly, the complex is composed of two ATP-binding proteins (LolD) and two transmembrane proteins (LolC and LolE).

It is found in the cell inner membrane. Functionally, part of the ABC transporter complex LolCDE involved in the translocation of mature outer membrane-directed lipoproteins, from the inner membrane to the periplasmic chaperone, LolA. Responsible for the formation of the LolA-lipoprotein complex in an ATP-dependent manner. The chain is Lipoprotein-releasing system ATP-binding protein LolD from Francisella tularensis subsp. tularensis (strain FSC 198).